We begin with the raw amino-acid sequence, 107 residues long: Late embryogenesis abundant protein M10 (107 aa).

The signal sequence occupies residues 1 to 19 (MGNLMSLVLVALLFSLSLA).

Its function is as follows. May be involved in the acquisition of desiccation tolerance during late phase of embryogenesis. This Arabidopsis thaliana (Mouse-ear cress) protein is Late embryogenesis abundant protein M10.